We begin with the raw amino-acid sequence, 342 residues long: Pre-mRNA-splicing factor 18 (342 aa).

Met1 bears the N-acetylmethionine mark.

Belongs to the PRP18 family. Heterodimer with PPIH. Interacts with PRPF4 and with the spliceosome. Part of a complex containing U4/U6 snRNPs.

Its subcellular location is the nucleus speckle. Participates in the second step of pre-mRNA splicing. In Mus musculus (Mouse), this protein is Pre-mRNA-splicing factor 18 (Prpf18).